We begin with the raw amino-acid sequence, 288 residues long: Shikimate dehydrogenase (NADP(+)) (288 aa).

Shikimate is bound by residues S22 to S24 and T69. The active-site Proton acceptor is the K73. The shikimate site is built by N94 and D110. Residues G131–A135 and L228 contribute to the NADP(+) site. Y230 is a binding site for shikimate. Residue G251 coordinates NADP(+).

The protein belongs to the shikimate dehydrogenase family. Homodimer.

The catalysed reaction is shikimate + NADP(+) = 3-dehydroshikimate + NADPH + H(+). The protein operates within metabolic intermediate biosynthesis; chorismate biosynthesis; chorismate from D-erythrose 4-phosphate and phosphoenolpyruvate: step 4/7. Functionally, involved in the biosynthesis of the chorismate, which leads to the biosynthesis of aromatic amino acids. Catalyzes the reversible NADPH linked reduction of 3-dehydroshikimate (DHSA) to yield shikimate (SA). The sequence is that of Shikimate dehydrogenase (NADP(+)) from Synechococcus sp. (strain JA-2-3B'a(2-13)) (Cyanobacteria bacterium Yellowstone B-Prime).